The chain runs to 445 residues: Ribosomal protein uS12 methylthiotransferase RimO (445 aa).

An MTTase N-terminal domain is found at 4–119 (YKVGMVSLGC…INEAIMNFIN (116 aa)). The [4Fe-4S] cluster site is built by Cys-13, Cys-48, Cys-82, Cys-157, Cys-161, and Cys-164. The 231-residue stretch at 143–373 (TTDKATAYLR…MLLQKEVSEE (231 aa)) folds into the Radical SAM core domain. The 66-residue stretch at 376–441 (KNKVGREYDV…EYDLVGVVCN (66 aa)) folds into the TRAM domain.

The protein belongs to the methylthiotransferase family. RimO subfamily. [4Fe-4S] cluster serves as cofactor.

The protein resides in the cytoplasm. The enzyme catalyses L-aspartate(89)-[ribosomal protein uS12]-hydrogen + (sulfur carrier)-SH + AH2 + 2 S-adenosyl-L-methionine = 3-methylsulfanyl-L-aspartate(89)-[ribosomal protein uS12]-hydrogen + (sulfur carrier)-H + 5'-deoxyadenosine + L-methionine + A + S-adenosyl-L-homocysteine + 2 H(+). Its function is as follows. Catalyzes the methylthiolation of an aspartic acid residue of ribosomal protein uS12. The polypeptide is Ribosomal protein uS12 methylthiotransferase RimO (Clostridium perfringens (strain 13 / Type A)).